Reading from the N-terminus, the 335-residue chain is UPF0353 protein MAP_3435c (335 aa).

2 consecutive transmembrane segments (helical) span residues 18–38 (WFFL…VQQF) and 67–87 (VPTI…AGPT). The region spanning 98-294 (VVMLVIDVSE…DSLKNVYSTL (197 aa)) is the VWFA domain. Residues 309–329 (MAWMLLGAVVLAGAVLAGLLL) form a helical membrane-spanning segment.

Belongs to the UPF0353 family.

Its subcellular location is the cell membrane. The sequence is that of UPF0353 protein MAP_3435c from Mycolicibacterium paratuberculosis (strain ATCC BAA-968 / K-10) (Mycobacterium paratuberculosis).